We begin with the raw amino-acid sequence, 185 residues long: Elongation factor P (185 aa).

This sequence belongs to the elongation factor P family.

It localises to the cytoplasm. The protein operates within protein biosynthesis; polypeptide chain elongation. Involved in peptide bond synthesis. Stimulates efficient translation and peptide-bond synthesis on native or reconstituted 70S ribosomes in vitro. Probably functions indirectly by altering the affinity of the ribosome for aminoacyl-tRNA, thus increasing their reactivity as acceptors for peptidyl transferase. The protein is Elongation factor P of Fervidobacterium nodosum (strain ATCC 35602 / DSM 5306 / Rt17-B1).